The sequence spans 290 residues: Transcription factor HES-1 (290 aa).

A disordered region spans residues 1-47 (MPADTGMEKPTASPIAGAPASASHTPDKPRSASEHRKSSKPIMEKRR). Residues 10-23 (PTASPIAGAPASAS) show a composition bias toward low complexity. Residues 25–36 (TPDKPRSASEHR) show a composition bias toward basic and acidic residues. Residues 35-92 (HRKSSKPIMEKRRRARINESLGQLKMLILDALKKDSSRHSKLEKADILEMTVKHLRNL) form the bHLH domain. Positions 111–144 (YRAGFNECMNEVTRFLSTCEGVNADVRARLLGHL) constitute an Orange domain. Residues 287 to 290 (WRPW) carry the WRPW motif motif.

As to quaternary structure, transcription repression requires formation of a complex with a corepressor protein of the Groucho/TLE family.

The protein resides in the nucleus. Its function is as follows. Transcriptional repressor of genes that require a bHLH protein for their transcription. May act as a negative regulator of myogenesis by inhibiting the functions of MYOD1 and ASH1. This chain is Transcription factor HES-1 (HES1), found in Gallus gallus (Chicken).